A 131-amino-acid polypeptide reads, in one-letter code: Snaclec A13 (131 aa).

Disulfide bonds link Cys-4–Cys-15, Cys-32–Cys-125, and Cys-100–Cys-117. Residues 11-126 (YEGHCYKVFN…CELAYHFICM (116 aa)) form the C-type lectin domain.

It belongs to the snaclec family. Heterodimer; disulfide-linked. As to expression, expressed by the venom gland.

The protein resides in the secreted. Interferes with one step of hemostasis (modulation of platelet aggregation, or coagulation cascade, for example). This Macrovipera lebetinus (Levantine viper) protein is Snaclec A13.